The sequence spans 293 residues: MTRDPIATARTLSEALPYLQRYAGAVVVVKFGGNAMGDEAAMAEFARDIVLMRQVGVNPVVVHGGGPMINELLGKLGIKSEFVRGKRVTDKATVEVVEMVLSGLVNKRIVQAINDQGGRAVGISGKDDDLMVCVADDPDLGFVGKPVEMNVQVLRDLYNAGIIPVVAPVATGMADNETFNVNGDTAAGAIAGALQADRLLLLTDVAGVKDASGEVLSQLTPSQVREMVASGTISGGMIPKTETALAALDEGVRAVVILDGRTPNACLIEIFTDEGAGTIIRSTEPRVKPRVRR.

Substrate is bound by residues 65–66, arginine 87, and asparagine 180; that span reads GG.

It belongs to the acetylglutamate kinase family. ArgB subfamily.

It is found in the cytoplasm. It catalyses the reaction N-acetyl-L-glutamate + ATP = N-acetyl-L-glutamyl 5-phosphate + ADP. It participates in amino-acid biosynthesis; L-arginine biosynthesis; N(2)-acetyl-L-ornithine from L-glutamate: step 2/4. Catalyzes the ATP-dependent phosphorylation of N-acetyl-L-glutamate. The polypeptide is Acetylglutamate kinase (Cereibacter sphaeroides (strain ATCC 17029 / ATH 2.4.9) (Rhodobacter sphaeroides)).